A 300-amino-acid polypeptide reads, in one-letter code: NAD kinase (300 aa).

The active-site Proton acceptor is the aspartate 75. Residues 75 to 76 (DG), 149 to 150 (ND), arginine 177, aspartate 179, 190 to 195 (TAYALS), alanine 214, and glutamine 248 contribute to the NAD(+) site.

This sequence belongs to the NAD kinase family. Requires a divalent metal cation as cofactor.

The protein localises to the cytoplasm. It carries out the reaction NAD(+) + ATP = ADP + NADP(+) + H(+). In terms of biological role, involved in the regulation of the intracellular balance of NAD and NADP, and is a key enzyme in the biosynthesis of NADP. Catalyzes specifically the phosphorylation on 2'-hydroxyl of the adenosine moiety of NAD to yield NADP. The protein is NAD kinase of Burkholderia pseudomallei (strain K96243).